Reading from the N-terminus, the 879-residue chain is JmjC domain-containing histone demethylation protein 1 (879 aa).

Disordered regions lie at residues 1–45 (MSEQ…EEGK), 117–212 (STSP…PKRK), and 407–449 (KDVK…EGLK). The PHD-type zinc-finger motif lies at 23 to 116 (PEPCPLCRET…KWYCAPCLAR (94 aa)). 2 stretches are compositionally biased toward basic and acidic residues: residues 183–192 (IDMKSEREQQ) and 407–433 (KDVKEKGRGNDSRESSEIRKEGSHLTE). In terms of domain architecture, JmjC spans 416–598 (NDSRESSEIR…TQLRLRQIEI (183 aa)). Thr-472 provides a ligand contact to substrate. Fe cation-binding residues include His-475 and Asp-477. Residue Lys-492 participates in substrate binding. His-566 lines the Fe cation pocket. Positions 763-879 (HPPAWSENRQ…KVEEDMDIDH (117 aa)) are disordered. Polar residues predominate over residues 769-782 (ENRQSPQIETTTVQ). Positions 786-818 (PSTSSSDAISGSGPGASPGASANGGANENEQAE) are enriched in low complexity. Positions 848–864 (FVEKKTVWGPKLDKEKI) are enriched in basic and acidic residues.

It belongs to the JHDM1 histone demethylase family. It depends on Fe(2+) as a cofactor.

It is found in the nucleus. The catalysed reaction is N(6),N(6)-dimethyl-L-lysyl(36)-[histone H3] + 2 2-oxoglutarate + 2 O2 = L-lysyl(36)-[histone H3] + 2 formaldehyde + 2 succinate + 2 CO2. Functionally, histone demethylase that specifically demethylates 'Lys-36' of histone H3, thereby playing a central role in histone code. This chain is JmjC domain-containing histone demethylation protein 1 (JHD1), found in Cryptococcus neoformans var. neoformans serotype D (strain B-3501A) (Filobasidiella neoformans).